Consider the following 147-residue polypeptide: Transcriptional regulator MraZ (147 aa).

SpoVT-AbrB domains follow at residues 5-47 (QQLR…SEKE) and 76-123 (TFEI…SKSK).

It belongs to the MraZ family. As to quaternary structure, forms oligomers.

It is found in the cytoplasm. Its subcellular location is the nucleoid. The sequence is that of Transcriptional regulator MraZ from Mycoplasmopsis synoviae (strain 53) (Mycoplasma synoviae).